Consider the following 312-residue polypeptide: Malate dehydrogenase (312 aa).

NAD(+) contacts are provided by residues 7-13 (GAAGGIG) and aspartate 34. The substrate site is built by arginine 81 and arginine 87. NAD(+) is bound by residues asparagine 94 and 117-119 (ITN). Substrate-binding residues include asparagine 119 and arginine 153. Histidine 177 serves as the catalytic Proton acceptor. Residue methionine 227 participates in NAD(+) binding.

This sequence belongs to the LDH/MDH superfamily. MDH type 1 family. As to quaternary structure, homodimer.

The catalysed reaction is (S)-malate + NAD(+) = oxaloacetate + NADH + H(+). In terms of biological role, catalyzes the reversible oxidation of malate to oxaloacetate. This is Malate dehydrogenase from Escherichia coli O139:H28 (strain E24377A / ETEC).